A 206-amino-acid polypeptide reads, in one-letter code: Ras-related protein Rab-14 (206 aa).

A GTP-binding site is contributed by 15–22; sequence GDMGVGKS. Positions 37-45 match the Effector region motif; it reads SPHTIGVEF. Residues 63–67 and 121–124 each bind GTP; these read DTAGQ and NKKD. The disordered stretch occupies residues 182–206; that stretch reads PDGGITKNPPQTITDKPQDASKCSC. The segment covering 189–206 has biased composition (polar residues); the sequence is NPPQTITDKPQDASKCSC. 2 S-geranylgeranyl cysteine lipidation sites follow: Cys204 and Cys206. Cys206 bears the Cysteine methyl ester mark.

It belongs to the small GTPase superfamily. Rab family.

The protein resides in the endosome. It localises to the contractile vacuole. Its subcellular location is the membrane. It catalyses the reaction GTP + H2O = GDP + phosphate + H(+). Rab activation is generally mediated by a guanine exchange factor (GEF), while inactivation through hydrolysis of bound GTP is catalyzed by a GTPase activating protein (GAP). That Rab is activated by the DENND6A and DENND6B guanine exchange factors (GEF). The small GTPases Rab are key regulators of intracellular membrane trafficking, from the formation of transport vesicles to their fusion with membranes. Rabs cycle between an inactive GDP-bound form and an active GTP-bound form that is able to recruit to membranes different set of downstream effectors directly responsible for vesicle formation, movement, tethering and fusion. Regulates the fusion of phagosomes and lysosomes. This Dictyostelium discoideum (Social amoeba) protein is Ras-related protein Rab-14 (rab14).